Reading from the N-terminus, the 203-residue chain is Protein shisa-like-1a (203 aa).

The N-terminal stretch at 1 to 25 is a signal peptide; it reads MIMNGRWSFNTLAIIFILLSTAALS. Residues 26-97 lie on the Extracellular side of the membrane; the sequence is AHFRVCEPYS…SDSFAHNNYT (72 aa). N-linked (GlcNAc...) asparagine glycosylation is found at asparagine 53, asparagine 63, asparagine 72, asparagine 83, and asparagine 95. A helical transmembrane segment spans residues 98–118; sequence ALIGVWIYGFFVMVLLALDFL. The Cytoplasmic portion of the chain corresponds to 119–203; that stretch reads YYSAMNYELC…LLSFQTSTAW (85 aa). The tract at residues 157 to 191 is disordered; the sequence is ELNTGPGLSQQQQLHLHHHHHHHHPRHSLRGDTQS. The segment covering 161-170 has biased composition (low complexity); sequence GPGLSQQQQL. Basic residues predominate over residues 171-184; it reads HLHHHHHHHHPRHS.

It belongs to the shisa family.

It localises to the membrane. The protein is Protein shisa-like-1a (shisal1a) of Danio rerio (Zebrafish).